Reading from the N-terminus, the 454-residue chain is Replicative DNA helicase DnaB (454 aa).

An N-terminal domain (NTD) region spans residues Met-1–Glu-149. The interval Lys-163 to Leu-176 is linker helix. Positions Arg-179–Phe-445 constitute an SF4 helicase domain. The tract at residues Ile-183–Ala-454 is C-terminal domain (CTD). ATP-binding residues include Ser-213, Gly-215, Lys-216, Thr-217, and Ala-218. Glu-241 functions as the Nucleophile in the catalytic mechanism. Residues Arg-250 and Gln-362 each coordinate ATP. The ssDNA site is built by Arg-381, Glu-382, and Gly-384. Lys-418, Gln-419, and Arg-420 together coordinate ATP.

It belongs to the helicase family. DnaB subfamily. In terms of assembly, homohexamer. Interacts with DnaG primase, as DnaB(6):DnaG(3). Interacts with the N-terminus of DnaI (shown with DnaI of B.subtilis), forms a helicase DnaB(6):DnaI(6) complex. The DnaB-DnaI complex is disrupted by DnaD (DnaD and DnaI from B.subtilis). A stable complex DnaI(6):DnaB(6):DnaG(3) fragment can be isolated; DnaI and DnaG do not contact each other (DnaI in this complex is derived from B.subtilis). Forms a complex with DNA clamp loader protein tau (shown with B.subtilis HolA) tau(3):DnaB(6); a single ATP hydrolysis even is sufficient for complex formation.

The enzyme catalyses Couples ATP hydrolysis with the unwinding of duplex DNA at the replication fork by translocating in the 5'-3' direction. This creates two antiparallel DNA single strands (ssDNA). The leading ssDNA polymer is the template for DNA polymerase III holoenzyme which synthesizes a continuous strand.. It carries out the reaction ATP + H2O = ADP + phosphate + H(+). Its function is as follows. The main replicative DNA helicase, it participates in initiation and elongation during chromosome replication. Travels ahead of the DNA replisome, separating double-stranded (ds)DNA into templates for DNA synthesis. Binding of single-stranded (ss)DNA to the hexamer suggests a 2-nucleotide step size for the helicase and a hand-over-hand mechanism of DNA unwinding. Has ssDNA-stimulated ATPase activity. DnaG primase stimulates the helicase activity (the helicase direction was not determine but is probably 5'-3'). Loaded onto DNA by helicase loader DnaI (shown with DnaI of B.subtilis); ATP-binding enhances loading and subsequent ATP hydrolysis dissociates the complex, leaving helicase on the DNA. Binds ssDNA and less well dsDNA, in the presence of ADPNP (probably 5'-adenylyl beta, gamma-imidodiphosphate, but not ATP) binding to both DNAs is improved. In Geobacillus stearothermophilus (Bacillus stearothermophilus), this protein is Replicative DNA helicase DnaB.